A 457-amino-acid chain; its full sequence is Argininosuccinate lyase (457 aa).

It belongs to the lyase 1 family. Argininosuccinate lyase subfamily.

The protein localises to the cytoplasm. It catalyses the reaction 2-(N(omega)-L-arginino)succinate = fumarate + L-arginine. The protein operates within amino-acid biosynthesis; L-arginine biosynthesis; L-arginine from L-ornithine and carbamoyl phosphate: step 3/3. The protein is Argininosuccinate lyase of Shigella flexneri serotype 5b (strain 8401).